The primary structure comprises 236 residues: Small ribosomal subunit protein uS3 (236 aa).

The KH type-2 domain occupies 39–107 (IRSYVMEELK…ETSLNIVEIR (69 aa)). Residues 214-236 (ASEHRATRNDNSSSSLNRRRESV) are disordered.

It belongs to the universal ribosomal protein uS3 family. As to quaternary structure, part of the 30S ribosomal subunit. Forms a tight complex with proteins S10 and S14.

Its function is as follows. Binds the lower part of the 30S subunit head. Binds mRNA in the 70S ribosome, positioning it for translation. In Bartonella bacilliformis (strain ATCC 35685 / KC583 / Herrer 020/F12,63), this protein is Small ribosomal subunit protein uS3.